Consider the following 360-residue polypeptide: Transcription elongation factor, mitochondrial (360 aa).

The transit peptide at Met1–Lys35 directs the protein to the mitochondrion.

This sequence belongs to the TEFM family. Interacts with POLRMT.

The protein localises to the mitochondrion matrix. Its subcellular location is the mitochondrion nucleoid. Functionally, transcription elongation factor which increases mitochondrial RNA polymerase processivity. Regulates transcription of the mitochondrial genome, including genes important for the oxidative phosphorylation machinery. This is Transcription elongation factor, mitochondrial (TEFM) from Homo sapiens (Human).